Reading from the N-terminus, the 847-residue chain is MKEVAKEIIKIDIEDELKNSYLDYAMSVIIGRALPDVRDGLKPVHRRILFAMKVLNNDWNKTYKKSARIVGDVIGKYHPHGDTAVYDAIVRMAQPFSLRYVLIDGQGNFGSIDGDSAAAMRYTEIRMSKIAYELLNDLDKNTVSFFSNYDGTEKIPEVLPAKIPNLLINGSSGIAVGMATNIPPHNIKEVINGCLAFIDDQNITLKKLMEHIPGPDFPTAGLINGKRGIEKAYKTGKGKIYIRAKSIIEIQKKTKKKSIIIYELPYQVNKARVIKGIANLVKEKKIEGITTLRDESDKEGMRIVIEIKKETKAEIILNQLYSLTQLEISFGINMVALIHGQPKVMTLKEILNAFINHRRKIIMRRSLFELNKIRKKIHILEGLIISLDNIDLIINLIKKSSTLEEAKNKLKTYHWYSKHAQYTQILKKNAHSLTPYDKKLRPIDTQKFFLTPEQIQAILELRLQKLTHLEHKKLISEYKQLFKTSNNLENILKNNNILTKIMKDELIKIRDNFGDKRRTKINVNYSDINTSDLINKENVVITLSYSGYVKYQLLSSYEAQKRGGKGKLAVKTKEEDFIENLLVANTHDIILCFSSKGILYWMKVYQLPEASRHARGRPIVNLLPLSSNERITAILPISEYKDSINIFMATSKGMVKKTSLYEFKKPRTKGIIAINLKADDELIGVSLTNGNNTIMLFTAQGKAVHFSEILVRKTGRTAIGVQGIKIKKSDKVVSLVVPKKHGNILLITEHGYGKRTEIHEFPIKSRATQGTIAMKITKKNGIVIGTMQVVNQDQIIIITNAGTLVRTRVLEIGILGRNTQGVIIIRTSKKEKVVALQKANALHLNSV.

Residues 34-533 (LPDVRDGLKP…NYSDINTSDL (500 aa)) form the Topo IIA-type catalytic domain. Catalysis depends on Tyr-122, which acts as the O-(5'-phospho-DNA)-tyrosine intermediate. Residues 560–566 (QKRGGKG) carry the GyrA-box motif.

This sequence belongs to the type II topoisomerase GyrA/ParC subunit family. Heterotetramer, composed of two GyrA and two GyrB chains. In the heterotetramer, GyrA contains the active site tyrosine that forms a transient covalent intermediate with DNA, while GyrB binds cofactors and catalyzes ATP hydrolysis.

Its subcellular location is the cytoplasm. It catalyses the reaction ATP-dependent breakage, passage and rejoining of double-stranded DNA.. Its function is as follows. A type II topoisomerase that negatively supercoils closed circular double-stranded (ds) DNA in an ATP-dependent manner to modulate DNA topology and maintain chromosomes in an underwound state. Negative supercoiling favors strand separation, and DNA replication, transcription, recombination and repair, all of which involve strand separation. Also able to catalyze the interconversion of other topological isomers of dsDNA rings, including catenanes and knotted rings. Type II topoisomerases break and join 2 DNA strands simultaneously in an ATP-dependent manner. This chain is DNA gyrase subunit A, found in Buchnera aphidicola subsp. Baizongia pistaciae (strain Bp).